We begin with the raw amino-acid sequence, 704 residues long: Protein arginine N-methyltransferase 7 (704 aa).

2 consecutive SAM-dependent MTase PRMT-type domains span residues E14 to W356 and S366 to E704.

This sequence belongs to the class I-like SAM-binding methyltransferase superfamily. Protein arginine N-methyltransferase family. PRMT7 subfamily.

Functionally, essential arginine methyltransferase that can both catalyze the formation of omega-N monomethylarginine (MMA) and symmetrical dimethylarginine (sDMA). Specifically mediates the symmetrical dimethylation of arginine residues in the small nuclear ribonucleoproteins SmD1 and SmD3. The polypeptide is Protein arginine N-methyltransferase 7 (Art7) (Drosophila grimshawi (Hawaiian fruit fly)).